A 314-amino-acid chain; its full sequence is Ribosome maturation factor RimP (314 aa).

3 disordered regions span residues 1–20 (MDLDGKVQPPSAQVGQQPLS), 152–176 (PIEASSPIGGSKGALRLTRTDAKPE), and 206–314 (AAKA…PAPK). The span at 10-19 (PSAQVGQQPL) shows a compositional bias: polar residues. Acidic residues predominate over residues 215–227 (DGNNEEQDEEQEE). Over residues 247–256 (PEHNPAQNPI) the composition is skewed to polar residues. Basic and acidic residues-rich tracts occupy residues 270-279 (TEFKKSKTGE) and 303-314 (SGHDMPRKPAPK).

The protein belongs to the RimP family.

It is found in the cytoplasm. In terms of biological role, required for maturation of 30S ribosomal subunits. This is Ribosome maturation factor RimP from Beijerinckia indica subsp. indica (strain ATCC 9039 / DSM 1715 / NCIMB 8712).